The following is a 1342-amino-acid chain: MVYSYTEKKRIRKDFGKRPQVLDVPYLLSIQLDSFQKFIEQDPEGQYGLEAAFRSVFPIQSYSGNSELQYVSYRLGEPVFDVKECQIRGVTYSAPLRVKLRLVIYEREAPEGTVKDIKEQEVYMGEIPLMTDNGTFVINGTERVIVSQLHRSPGVFFDSDKGKTHSSGKVLYNARIIPYRGSWLDFEFDPKDNLFVRIDRRRKLPATIILRALNYTTEQILDLFFEKVVFEIRDNKLQMELIPERLRGETASFDIEANGKVYVEKGRRITARHIRQLEKDDIKHIEVPVEYIAGKVAAKDYIDEATGELICPANMELSLDLLAKLSQSGHKRIETLFTNDLDHGPYISETVRVDPTNDRLSALVEIYRMMRPGEPPTREAAESLFENLFFSEDRYDLSAVGRMKFNRSLLRDEIEGSGILSKDDIIEVMKKLIDIRNGKGEVDDIDHLGNRRIRSVGEMAENQFRVGLVRVERAVKERLSLGDLDTLMPQDMINAKPISAAVKEFFGSSQLSQFMDQNNPLSEITHKRRISALGPGGLTRERAGFEVRDVHPTHYGRVCPIETPEGPNIGLINSLSVYAQTNEYGFLETPYRKVTDGVVTDEIHYLSAIEEGNYVIAQANSNLDENGHFVEDLVTCRSKGESSLFSRDQVDYMDVSTQQVVSVGASLIPFLEHDDANRALMGANMQRQAVPTLRADKPLVGTGMERAVAVDSGVTAVAKRGGTVQYVDASRIVIKVNEDEMYPGEAGIDIYNLTKYTRSNQNTCINQMPCVSLGEPIERGDVLADGPSTDLGELALGQNMRVAFMPWNGYNFEDSILVSERVVQEDRFTTIHIQELACVSRDTKLGPEEITADIPNVGEAALSKLDESGIVYIGAEVTGGDILVGKVTPKGETQLTPEEKLLRAIFGEKASDVKDSSLRVPNGVSGTVIDVQVFTRDGVEKDKRALEIEEMQLKQAKKDLSEELQILEAGLFSRIYAVLVSGGVEAEKLDKLPRDRWLELGLTDEEKQNQLEQLAEQYDELKHEFEKKLEAKRRKITQGDDLAPGVLKIVKVYLAVKRRIQPGDKMAGRHGNKGVISKINPIEDMPHDANGTPVDIVLNPLGVPSRMNIGQILETHLGMAAKGIGDKINAMLKQQQEVAKLREFIQRAYDLGADVRQKVDLNTFSDEEVLRLAENLRKGMPIATPVFDGAKEAEIKELLQLGDLPTSGQITLFDGRTGEQFERPVTVGYMYMLKLNHLVDDKMHARSTGSYSLVTQQPLGGKAQFGGQRFGEMEVWALEAYGAAYTLQEMLTVKSDDVNGRTKMYKNIVDGNHQMEPGMPESFNVLLKEIRSLGINIELEDE.

Belongs to the RNA polymerase beta chain family. In terms of assembly, the RNAP catalytic core consists of 2 alpha, 1 beta, 1 beta' and 1 omega subunit. When a sigma factor is associated with the core the holoenzyme is formed, which can initiate transcription.

It catalyses the reaction RNA(n) + a ribonucleoside 5'-triphosphate = RNA(n+1) + diphosphate. Its function is as follows. DNA-dependent RNA polymerase catalyzes the transcription of DNA into RNA using the four ribonucleoside triphosphates as substrates. This chain is DNA-directed RNA polymerase subunit beta, found in Klebsiella pneumoniae subsp. pneumoniae (strain ATCC 700721 / MGH 78578).